A 107-amino-acid chain; its full sequence is Iron-binding protein IscA (107 aa).

Residues Cys-35, Cys-99, and Cys-101 each coordinate Fe cation.

The protein belongs to the HesB/IscA family. As to quaternary structure, homodimer; may form tetramers and higher multimers. Requires Fe cation as cofactor.

In terms of biological role, is able to transfer iron-sulfur clusters to apo-ferredoxin. Multiple cycles of [2Fe2S] cluster formation and transfer are observed, suggesting that IscA acts catalytically. Recruits intracellular free iron so as to provide iron for the assembly of transient iron-sulfur cluster in IscU in the presence of IscS, L-cysteine and the thioredoxin reductase system TrxA/TrxB. The protein is Iron-binding protein IscA of Photorhabdus laumondii subsp. laumondii (strain DSM 15139 / CIP 105565 / TT01) (Photorhabdus luminescens subsp. laumondii).